A 404-amino-acid polypeptide reads, in one-letter code: Phosphoglycerate kinase (404 aa).

Residues 22–24, Arg37, 60–63, Arg120, and Arg160 contribute to the substrate site; these read DFN and HLGR. ATP contacts are provided by residues Lys215, Glu333, and 360 to 363; that span reads GGDS.

The protein belongs to the phosphoglycerate kinase family. As to quaternary structure, monomer.

The protein localises to the cytoplasm. The enzyme catalyses (2R)-3-phosphoglycerate + ATP = (2R)-3-phospho-glyceroyl phosphate + ADP. It functions in the pathway carbohydrate degradation; glycolysis; pyruvate from D-glyceraldehyde 3-phosphate: step 2/5. The sequence is that of Phosphoglycerate kinase from Latilactobacillus sakei subsp. sakei (strain 23K) (Lactobacillus sakei subsp. sakei).